Consider the following 513-residue polypeptide: Anthranilate synthase component 1 (513 aa).

L-tryptophan contacts are provided by residues Ser50 and 279-281 (PYM). Residue 314 to 315 (GT) participates in chorismate binding. Glu341 serves as a coordination point for Mg(2+). Residues Tyr429, Arg449, 463–465 (GAG), and Gly465 each bind chorismate. Glu478 contacts Mg(2+).

This sequence belongs to the anthranilate synthase component I family. Heterotetramer consisting of two non-identical subunits: a beta subunit (TrpG) and a large alpha subunit (TrpE). Mg(2+) serves as cofactor.

The enzyme catalyses chorismate + L-glutamine = anthranilate + pyruvate + L-glutamate + H(+). Its pathway is amino-acid biosynthesis; L-tryptophan biosynthesis; L-tryptophan from chorismate: step 1/5. With respect to regulation, feedback inhibited by tryptophan. Its function is as follows. Part of a heterotetrameric complex that catalyzes the two-step biosynthesis of anthranilate, an intermediate in the biosynthesis of L-tryptophan. In the first step, the glutamine-binding beta subunit (TrpG) of anthranilate synthase (AS) provides the glutamine amidotransferase activity which generates ammonia as a substrate that, along with chorismate, is used in the second step, catalyzed by the large alpha subunit of AS (TrpE) to produce anthranilate. In the absence of TrpG, TrpE can synthesize anthranilate directly from chorismate and high concentrations of ammonia. The chain is Anthranilate synthase component 1 (trpE) from Bacillus pumilus (Bacillus mesentericus).